Consider the following 508-residue polypeptide: Maturase K (508 aa).

This sequence belongs to the intron maturase 2 family. MatK subfamily.

It localises to the plastid. The protein localises to the chloroplast. In terms of biological role, usually encoded in the trnK tRNA gene intron. Probably assists in splicing its own and other chloroplast group II introns. The protein is Maturase K of Wolffia arrhiza (Rootless water-meal).